The sequence spans 364 residues: D-alanine--D-alanine ligase (364 aa).

The 214-residue stretch at 134 to 347 (RRLACINGLK…YPDLLDELIN (214 aa)) folds into the ATP-grasp domain. 167 to 222 (ASEFGWPLFVKPCSLGSSVGIHKANNMDELNAAVADALRYDEEILVEEFIVGREIE) is a binding site for ATP. Residues D300, E314, and N316 each coordinate Mg(2+).

Belongs to the D-alanine--D-alanine ligase family. Mg(2+) serves as cofactor. It depends on Mn(2+) as a cofactor.

The protein localises to the cytoplasm. The catalysed reaction is 2 D-alanine + ATP = D-alanyl-D-alanine + ADP + phosphate + H(+). It functions in the pathway cell wall biogenesis; peptidoglycan biosynthesis. Cell wall formation. The polypeptide is D-alanine--D-alanine ligase (Legionella pneumophila (strain Lens)).